A 279-amino-acid polypeptide reads, in one-letter code: Tryptophan synthase alpha chain (279 aa).

Residues glutamate 50 and aspartate 61 each act as proton acceptor in the active site.

The protein belongs to the TrpA family. In terms of assembly, tetramer of two alpha and two beta chains.

It carries out the reaction (1S,2R)-1-C-(indol-3-yl)glycerol 3-phosphate + L-serine = D-glyceraldehyde 3-phosphate + L-tryptophan + H2O. Its pathway is amino-acid biosynthesis; L-tryptophan biosynthesis; L-tryptophan from chorismate: step 5/5. In terms of biological role, the alpha subunit is responsible for the aldol cleavage of indoleglycerol phosphate to indole and glyceraldehyde 3-phosphate. This chain is Tryptophan synthase alpha chain, found in Brucella melitensis biotype 2 (strain ATCC 23457).